The following is a 227-amino-acid chain: Glutathione S-transferase U17 (227 aa).

Residues 4 to 83 (SDVKLIGAWA…YIDDTWSSSG (80 aa)) enclose the GST N-terminal domain. Glutathione is bound by residues 14–15 (SP), 40–41 (SK), 54–55 (KI), and 67–68 (ES). The GST C-terminal domain occupies 90–222 (DPYDRAMARF…KLAEFAKKIF (133 aa)).

The protein belongs to the GST superfamily. Tau family.

The protein resides in the cytoplasm. Its subcellular location is the cytosol. It carries out the reaction RX + glutathione = an S-substituted glutathione + a halide anion + H(+). Its function is as follows. Involved in light signaling, mainly phyA-mediated photomorphogenesis and in the integration of various phytohormone signals to modulate various aspects of plant development by affecting glutathione pools. In vitro, possesses glutathione S-transferase activity toward 1-chloro-2,4-dinitrobenzene (CDNB) and benzyl isothiocyanate (BITC). In Arabidopsis thaliana (Mouse-ear cress), this protein is Glutathione S-transferase U17 (GSTU17).